The primary structure comprises 42 residues: uncharacterized protein (42 aa).

Residues 18–38 traverse the membrane as a helical segment; sequence VGAISLTVMMILFFIAIVWFL.

It is found in the host membrane. This is an uncharacterized protein from His1 virus (isolate Australia/Victoria) (His1V).